Consider the following 858-residue polypeptide: Sarcolemmal membrane-associated protein (858 aa).

The necessary for targeting to centrosomes stretch occupies residues 1-165 (MPSALAIFTC…AANTPSMYSQ (165 aa)). The Cytoplasmic segment spans residues 1-832 (MPSALAIFTC…REKGNNKPWP (832 aa)). One can recognise an FHA domain in the interval 28–85 (IKIGRSVARCRPAQNNATFDCKVLSRNHALVWFDHKTSKFYLQDTKSSNGTFINSQRL). A Phosphoserine modification is found at S150. Coiled-coil stretches lie at residues 169-204 (QLSQ…ASDT) and 232-381 (NQTE…ALQV). Residues 456 to 470 (KLSKEENQAKAKESD) are compositionally biased toward basic and acidic residues. The interval 456 to 492 (KLSKEENQAKAKESDLSDTLSPSKEKSSDDTTDDAQM) is disordered. S472 and S476 each carry phosphoserine. Residues 516–829 (QAETEAKQDT…KLLREKGNNK (314 aa)) are a coiled coil. The chain crosses the membrane as a helical; Anchor for type IV membrane protein span at residues 833-853 (WMPMVAALVAVTAMVLYVPGL). Over 854 to 858 (ARASP) the chain is Extracellular.

Belongs to the SLMAP family. As to quaternary structure, homodimer. Interacts with myosin. Interacts with SIKE1 and both associate with the STRIPAK core complex composed of PP2A catalytic and scaffolding subunits, the striatins (PP2A regulatory subunits), the striatin-associated proteins MOB4, STRIP1 and STRIP2, PDCD10 and members of the STE20 kinases, such as STK24 and STK26. Interacts (via FHA domain) with STK3 (when phosphorylated); the interaction associates STK3 with the STRIPAK complex.

It localises to the cell membrane. It is found in the sarcolemma. The protein localises to the cytoplasm. Its subcellular location is the cytoskeleton. The protein resides in the microtubule organizing center. It localises to the centrosome. It is found in the endoplasmic reticulum membrane. The protein localises to the mitochondrion membrane. In terms of biological role, associates with the striatin-interacting phosphatase and kinase (STRIPAK) core complex, forming the extended (SIKE1:SLMAP)STRIPAK complex. The (SIKE1:SLMAP)STRIPAK complex dephosphorylates STK3 leading to the inhibition of Hippo signaling and the control of cell growth. May play a role during myoblast fusion. The chain is Sarcolemmal membrane-associated protein (Slmap) from Rattus norvegicus (Rat).